The primary structure comprises 642 residues: Chaperone protein DnaK (642 aa).

Threonine 198 is subject to Phosphothreonine; by autocatalysis. The tract at residues 602-642 (EAAGGAEAEAAAGGHGGASGSHDDKVVDADFEEVDGDKKGK) is disordered. A compositionally biased stretch (low complexity) spans 603–613 (AAGGAEAEAAA).

The protein belongs to the heat shock protein 70 family.

In terms of biological role, acts as a chaperone. The protein is Chaperone protein DnaK of Paramagnetospirillum magneticum (strain ATCC 700264 / AMB-1) (Magnetospirillum magneticum).